The primary structure comprises 351 residues: dTDP-glucose 4,6-dehydratase (351 aa).

NAD(+)-binding positions include 12–13 (FI), 32–35 (DALT), 58–59 (DI), 80–84 (FAAES), and T99. S84 is a substrate binding site. T133 contacts substrate. The active-site Proton donor is the D134. Catalysis depends on proton acceptor residues E135 and Y158. 158–162 (YSASK) is a binding site for NAD(+). Position 187 (N187) interacts with substrate. An NAD(+)-binding site is contributed by N188. Substrate-binding positions include 197–198 (KL), 213–215 (PVY), R222, N257, and 289–293 (DRPGH).

Belongs to the NAD(P)-dependent epimerase/dehydratase family. dTDP-glucose dehydratase subfamily. As to quaternary structure, homodimer. NAD(+) is required as a cofactor.

The enzyme catalyses dTDP-alpha-D-glucose = dTDP-4-dehydro-6-deoxy-alpha-D-glucose + H2O. Its pathway is carbohydrate biosynthesis; dTDP-L-rhamnose biosynthesis. The protein operates within bacterial outer membrane biogenesis; LPS O-antigen biosynthesis. Its function is as follows. Catalyzes the dehydration of dTDP-D-glucose to form dTDP-6-deoxy-D-xylo-4-hexulose via a three-step process involving oxidation, dehydration and reduction. This Xanthomonas campestris pv. campestris (strain B100) protein is dTDP-glucose 4,6-dehydratase (rfbB).